Here is a 333-residue protein sequence, read N- to C-terminus: Phosphate acyltransferase (333 aa).

The protein belongs to the PlsX family. As to quaternary structure, homodimer. Probably interacts with PlsY.

The protein localises to the cytoplasm. The enzyme catalyses a fatty acyl-[ACP] + phosphate = an acyl phosphate + holo-[ACP]. The protein operates within lipid metabolism; phospholipid metabolism. In terms of biological role, catalyzes the reversible formation of acyl-phosphate (acyl-PO(4)) from acyl-[acyl-carrier-protein] (acyl-ACP). This enzyme utilizes acyl-ACP as fatty acyl donor, but not acyl-CoA. The protein is Phosphate acyltransferase of Aliarcobacter butzleri (strain RM4018) (Arcobacter butzleri).